A 565-amino-acid polypeptide reads, in one-letter code: FACT complex subunit ctc-1 (565 aa).

2 disordered regions span residues 151–173 and 477–565; these read GNDG…ASAG and LGDD…KKTA. Residues 152–165 show a composition bias toward gly residues; that stretch reads NDGGKSNGHSGTGG. 3 stretches are compositionally biased toward acidic residues: residues 478–489, 500–522, and 532–553; these read GDDDMASSDEEA, DEDE…AEEY, and GSEE…DDDE.

This sequence belongs to the SSRP1 family. Forms a stable heterodimer with ctc-2/spt16. The dimer of ctc-1 and ctc-2 weakly associates with multiple molecules of nhp-1/nhp6 to form the FACT complex.

The protein localises to the nucleus. It is found in the chromosome. Its function is as follows. Component of the FACT complex, a general chromatin factor that acts to reorganize nucleosomes. The FACT complex is involved in multiple processes that require DNA as a template such as mRNA elongation, DNA replication and DNA repair. During transcription elongation the FACT complex acts as a histone chaperone that both destabilizes and restores nucleosomal structure. It facilitates the passage of RNA polymerase II and transcription by promoting the dissociation of one histone H2A-H2B dimer from the nucleosome, then subsequently promotes the reestablishment of the nucleosome following the passage of RNA polymerase II. The chain is FACT complex subunit ctc-1 (ctc-1) from Neurospora crassa (strain ATCC 24698 / 74-OR23-1A / CBS 708.71 / DSM 1257 / FGSC 987).